A 491-amino-acid chain; its full sequence is Anthranilate synthase component 1 (491 aa).

L-tryptophan-binding positions include serine 49 and 271 to 273; that span reads PYL. A chorismate-binding site is contributed by 306-307; sequence GT. Glutamate 333 contributes to the Mg(2+) binding site. Chorismate contacts are provided by residues tyrosine 421, arginine 441, 455 to 457, and glycine 457; that span reads GAG. Position 470 (glutamate 470) interacts with Mg(2+).

It belongs to the anthranilate synthase component I family. In terms of assembly, heterotetramer consisting of two non-identical subunits: a beta subunit (TrpG) and a large alpha subunit (TrpE). Mg(2+) serves as cofactor.

It catalyses the reaction chorismate + L-glutamine = anthranilate + pyruvate + L-glutamate + H(+). The protein operates within amino-acid biosynthesis; L-tryptophan biosynthesis; L-tryptophan from chorismate: step 1/5. Feedback inhibited by tryptophan. In terms of biological role, part of a heterotetrameric complex that catalyzes the two-step biosynthesis of anthranilate, an intermediate in the biosynthesis of L-tryptophan. In the first step, the glutamine-binding beta subunit (TrpG) of anthranilate synthase (AS) provides the glutamine amidotransferase activity which generates ammonia as a substrate that, along with chorismate, is used in the second step, catalyzed by the large alpha subunit of AS (TrpE) to produce anthranilate. In the absence of TrpG, TrpE can synthesize anthranilate directly from chorismate and high concentrations of ammonia. This Neisseria gonorrhoeae (strain ATCC 700825 / FA 1090) protein is Anthranilate synthase component 1 (trpE).